A 388-amino-acid chain; its full sequence is Processive diacylglycerol beta-glucosyltransferase (388 aa).

The protein belongs to the glycosyltransferase 28 family. UgtP subfamily.

It is found in the cell membrane. It carries out the reaction a 1,2-diacyl-3-O-(beta-D-glucopyranosyl)-sn-glycerol + UDP-alpha-D-glucose = a 1,2-diacyl-3-O-(beta-D-Glc-(1-&gt;6)-beta-D-Glc)-sn-glycerol + UDP + H(+). The enzyme catalyses a 1,2-diacyl-3-O-(beta-D-Glc-(1-&gt;6)-beta-D-Glc)-sn-glycerol + UDP-alpha-D-glucose = a 1,2-diacyl-3-O-(beta-D-Glc-(1-&gt;6)-beta-D-Glc-(1-&gt;6)-beta-D-Glc)-sn-glycerol + UDP + H(+). The catalysed reaction is a 1,2-diacyl-sn-glycerol + UDP-alpha-D-glucose = a 1,2-diacyl-3-O-(beta-D-glucopyranosyl)-sn-glycerol + UDP + H(+). The protein operates within glycolipid metabolism; diglucosyl-diacylglycerol biosynthesis. In terms of biological role, processive glucosyltransferase involved in the biosynthesis of both the bilayer- and non-bilayer-forming membrane glucolipids. Is able to successively transfer up to three glucosyl residues to diacylglycerol (DAG), thereby catalyzing the formation of beta-monoglucosyl-DAG (3-O-(beta-D-glucopyranosyl)-1,2-diacyl-sn-glycerol), beta-diglucosyl-DAG (3-O-(beta-D-glucopyranosyl-beta-(1-&gt;6)-D-glucopyranosyl)-1,2-diacyl-sn-glycerol) and beta-triglucosyl-DAG (3-O-(beta-D-glucopyranosyl-beta-(1-&gt;6)-D-glucopyranosyl-beta-(1-&gt;6)-D-glucopyranosyl)-1,2-diacyl-sn-glycerol). Beta-diglucosyl-DAG is the predominant glycolipid found in Bacillales and is also used as a membrane anchor for lipoteichoic acid (LTA). The chain is Processive diacylglycerol beta-glucosyltransferase from Bacillus mycoides (strain KBAB4) (Bacillus weihenstephanensis).